A 641-amino-acid chain; its full sequence is 1-deoxy-D-xylulose-5-phosphate synthase (641 aa).

Residues His-79 and 120–122 each bind thiamine diphosphate; that span reads AHS. Mg(2+) is bound at residue Asp-151. Thiamine diphosphate is bound by residues 152–153, Asn-180, Tyr-290, and Glu-372; that span reads GA. Mg(2+) is bound at residue Asn-180.

Belongs to the transketolase family. DXPS subfamily. Homodimer. It depends on Mg(2+) as a cofactor. Thiamine diphosphate serves as cofactor.

The enzyme catalyses D-glyceraldehyde 3-phosphate + pyruvate + H(+) = 1-deoxy-D-xylulose 5-phosphate + CO2. It participates in metabolic intermediate biosynthesis; 1-deoxy-D-xylulose 5-phosphate biosynthesis; 1-deoxy-D-xylulose 5-phosphate from D-glyceraldehyde 3-phosphate and pyruvate: step 1/1. In terms of biological role, catalyzes the acyloin condensation reaction between C atoms 2 and 3 of pyruvate and glyceraldehyde 3-phosphate to yield 1-deoxy-D-xylulose-5-phosphate (DXP). The sequence is that of 1-deoxy-D-xylulose-5-phosphate synthase from Bradyrhizobium sp. (strain BTAi1 / ATCC BAA-1182).